Consider the following 251-residue polypeptide: MEKQGLFSALCYLMLNTPLLFSVNATFTEVPKDVTIREGEDIEMPCAFRASGSTSFSLEIQWWYLKEATREMAQELAISAPGNRNKVTTSKDATKISTVRVQGNDISHRLRLSNVKKQDEGVYECRVSDFGDDETQEHKAQAMLRVISRFSPPDMQAAEAVSHIQSSGPRRNNPSSRATPEPGNKRAVPPAENLAPSLSTAASSSASPAPGKAAILRQQHGSGTGPIFANDPALYMFLLIFHQLVYLLLNH.

Positions 1 to 25 (MEKQGLFSALCYLMLNTPLLFSVNA) are cleaved as a signal peptide. One can recognise an Ig-like V-type domain in the interval 26 to 142 (TFTEVPKDVT…DETQEHKAQA (117 aa)). Topologically, residues 26–226 (TFTEVPKDVT…RQQHGSGTGP (201 aa)) are extracellular. Cysteine 46 and cysteine 125 are disulfide-bonded. The segment at 157 to 213 (AAEAVSHIQSSGPRRNNPSSRATPEPGNKRAVPPAENLAPSLSTAASSSASPAPGKA) is disordered. Low complexity-rich tracts occupy residues 166 to 177 (SSGPRRNNPSSR) and 195 to 213 (APSL…PGKA). Residues 227–247 (IFANDPALYMFLLIFHQLVYL) form a helical membrane-spanning segment. At 248–251 (LLNH) the chain is on the cytoplasmic side.

Its subcellular location is the membrane. The chain is V-set and transmembrane domain-containing protein 2B (vstm2b) from Xenopus tropicalis (Western clawed frog).